The sequence spans 959 residues: Translation initiation factor IF-2 (959 aa).

The segment covering 1–10 has biased composition (basic and acidic residues); sequence MSDKTNDDKT. A disordered region spans residues 1 to 374; sequence MSDKTNDDKT…SQMQETREKI (374 aa). Positions 27 to 37 are enriched in polar residues; that stretch reads EQSTVRQNFSH. 2 stretches are compositionally biased toward low complexity: residues 63–118 and 128–138; these read AAAA…VTKP and QRPGGQQAQRP. Basic and acidic residues-rich tracts occupy residues 154-225 and 232-241; these read SEMD…EAAK and ARSERRDDAR. Positions 246-284 are enriched in low complexity; sequence GARPQQAGRPQGGRPQPAGRPQQGSPRPAPIIADAAPIA. Residues 318 to 333 are compositionally biased toward basic and acidic residues; the sequence is PEVRAPKVVKGEDDRR. A tr-type G domain is found at 457-626; sequence SRPPVVTIMG…LLQAEMLDLK (170 aa). The tract at residues 466–473 is G1; it reads GHVDHGKT. 466-473 lines the GTP pocket; the sequence is GHVDHGKT. Positions 491 to 495 are G2; sequence GITQH. Residues 512–515 are G3; it reads DTPG. GTP-binding positions include 512-516 and 566-569; these read DTPGH and NKID. Residues 566–569 form a G4 region; that stretch reads NKID. The G5 stretch occupies residues 602–604; sequence SAK.

Belongs to the TRAFAC class translation factor GTPase superfamily. Classic translation factor GTPase family. IF-2 subfamily.

It localises to the cytoplasm. Functionally, one of the essential components for the initiation of protein synthesis. Protects formylmethionyl-tRNA from spontaneous hydrolysis and promotes its binding to the 30S ribosomal subunits. Also involved in the hydrolysis of GTP during the formation of the 70S ribosomal complex. This Brucella ovis (strain ATCC 25840 / 63/290 / NCTC 10512) protein is Translation initiation factor IF-2.